The primary structure comprises 235 residues: Large ribosomal subunit protein uL1 (235 aa).

Belongs to the universal ribosomal protein uL1 family. As to quaternary structure, part of the 50S ribosomal subunit.

Binds directly to 23S rRNA. The L1 stalk is quite mobile in the ribosome, and is involved in E site tRNA release. Functionally, protein L1 is also a translational repressor protein, it controls the translation of the L11 operon by binding to its mRNA. The polypeptide is Large ribosomal subunit protein uL1 (Arthrobacter sp. (strain FB24)).